The sequence spans 101 residues: NAD(P)H-quinone oxidoreductase subunit 4L, chloroplastic (101 aa).

3 consecutive transmembrane segments (helical) span residues 2 to 22, 32 to 52, and 61 to 81; these read IFEH…YGLI, MCLE…SDFF, and IFSI…PAIV.

Belongs to the complex I subunit 4L family. In terms of assembly, NDH is composed of at least 16 different subunits, 5 of which are encoded in the nucleus.

Its subcellular location is the plastid. It localises to the chloroplast thylakoid membrane. The catalysed reaction is a plastoquinone + NADH + (n+1) H(+)(in) = a plastoquinol + NAD(+) + n H(+)(out). The enzyme catalyses a plastoquinone + NADPH + (n+1) H(+)(in) = a plastoquinol + NADP(+) + n H(+)(out). Its function is as follows. NDH shuttles electrons from NAD(P)H:plastoquinone, via FMN and iron-sulfur (Fe-S) centers, to quinones in the photosynthetic chain and possibly in a chloroplast respiratory chain. The immediate electron acceptor for the enzyme in this species is believed to be plastoquinone. Couples the redox reaction to proton translocation, and thus conserves the redox energy in a proton gradient. This chain is NAD(P)H-quinone oxidoreductase subunit 4L, chloroplastic, found in Phaseolus vulgaris (Kidney bean).